A 99-amino-acid polypeptide reads, in one-letter code: Large ribosomal subunit protein eL21 (99 aa).

This sequence belongs to the eukaryotic ribosomal protein eL21 family.

This is Large ribosomal subunit protein eL21 from Staphylothermus marinus (strain ATCC 43588 / DSM 3639 / JCM 9404 / F1).